The sequence spans 1452 residues: ABC multidrug transporter A-1 (1452 aa).

Residues 1–20 (MNESHEAGKNSSTNVEEREE) form a disordered region. N-linked (GlcNAc...) asparagine glycans are attached at residues Asn2, Asn10, Asn228, Asn287, and Asn311. One can recognise an ABC transporter 1 domain in the interval 110-363 (LKTLSLARIA…FLQMGFVCPD (254 aa)). A run of 6 helical transmembrane segments spans residues 474–494 (VTIS…SIFY), 508–528 (ALLF…MLTL), 554–574 (MIMD…VLYF), 583–603 (GAFF…SMFF), 616–636 (VLPF…FAIP), and 725–745 (IGVI…ATDF). Positions 802–1044 (FQWKDVCFDI…ILIDYFVRNG (243 aa)) constitute an ABC transporter 2 domain. An ATP-binding site is contributed by 838–845 (GVSGAGKT). Transmembrane regions (helical) follow at residues 1153 to 1173 (ALCV…PNTI), 1183 to 1203 (IFML…HFVA), 1223 to 1243 (FLIA…VLMF), 1271 to 1291 (LMIW…IAAF), 1297 to 1317 (AGNL…VLAT), and 1324 to 1344 (FWIF…MLSV). N-linked (GlcNAc...) asparagine glycosylation is found at Asn1350, Asn1365, and Asn1391. Residues 1418–1438 (FGLMWVFIVFNIFAACSLYWW) form a helical membrane-spanning segment.

This sequence belongs to the ABC transporter superfamily. ABCG family. PDR (TC 3.A.1.205) subfamily.

It localises to the membrane. ABC transporter that seems not to be involved in the efflux of toxic substances, at least not the classical compounds such as itraconazole, amphotericin B, voriconazole, posaconazole, ravuconazole, or echinocandins. The protein is ABC multidrug transporter A-1 of Aspergillus fumigatus (strain ATCC MYA-4609 / CBS 101355 / FGSC A1100 / Af293) (Neosartorya fumigata).